The following is a 256-amino-acid chain: Pimeloyl-[acyl-carrier protein] methyl ester esterase (256 aa).

The AB hydrolase-1 domain occupies 15–242 (HLVLLHGWGL…AAHAPFISHP (228 aa)). Substrate is bound by residues Trp-22, 82–83 (SL), and 143–147 (FLALQ). Ser-82 (nucleophile) is an active-site residue. Residues Asp-207 and His-235 contribute to the active site. His-235 is a substrate binding site.

This sequence belongs to the AB hydrolase superfamily. Carboxylesterase BioH family. As to quaternary structure, monomer.

The protein localises to the cytoplasm. It carries out the reaction 6-carboxyhexanoyl-[ACP] methyl ester + H2O = 6-carboxyhexanoyl-[ACP] + methanol + H(+). It functions in the pathway cofactor biosynthesis; biotin biosynthesis. In terms of biological role, the physiological role of BioH is to remove the methyl group introduced by BioC when the pimeloyl moiety is complete. It allows to synthesize pimeloyl-ACP via the fatty acid synthetic pathway through the hydrolysis of the ester bonds of pimeloyl-ACP esters. This chain is Pimeloyl-[acyl-carrier protein] methyl ester esterase, found in Salmonella newport (strain SL254).